A 1040-amino-acid chain; its full sequence is Multidrug resistance protein MdtB (1040 aa).

12 helical membrane-spanning segments follow: residues 16–36 (FIMR…AGII), 347–367 (LMMA…NIPA), 369–389 (IIPG…MVFL), 396–416 (LTLM…IVVI), 440–460 (IGFT…PLLF), 472–492 (FAIT…TLTP), 537–557 (WLTL…WVFI), 863–883 (LGST…VLGI), 888–908 (FIHP…ALLA), 911–931 (IAGS…IGIV), 968–988 (ILMT…STGV), and 998–1018 (IGMV…TPVI).

This sequence belongs to the resistance-nodulation-cell division (RND) (TC 2.A.6) family. MdtB subfamily. In terms of assembly, part of a tripartite efflux system composed of MdtA, MdtB and MdtC. MdtB forms a heteromultimer with MdtC.

The protein resides in the cell inner membrane. This chain is Multidrug resistance protein MdtB, found in Shigella boydii serotype 18 (strain CDC 3083-94 / BS512).